We begin with the raw amino-acid sequence, 246 residues long: Adenosylcobinamide-GDP ribazoletransferase (246 aa).

The next 7 helical transmembrane spans lie at 30–50, 51–71, 105–125, 131–151, 167–189, 193–210, and 226–246; these read VNWY…VHQA, GLVL…WVYV, VGAM…GAVA, GWGS…LLSI, ISSG…AGWY, LQVM…LWFS, and GAVI…SWWL.

This sequence belongs to the CobS family. Mg(2+) is required as a cofactor.

The protein localises to the cell membrane. It catalyses the reaction alpha-ribazole + adenosylcob(III)inamide-GDP = adenosylcob(III)alamin + GMP + H(+). The enzyme catalyses alpha-ribazole 5'-phosphate + adenosylcob(III)inamide-GDP = adenosylcob(III)alamin 5'-phosphate + GMP + H(+). It functions in the pathway cofactor biosynthesis; adenosylcobalamin biosynthesis; adenosylcobalamin from cob(II)yrinate a,c-diamide: step 7/7. Joins adenosylcobinamide-GDP and alpha-ribazole to generate adenosylcobalamin (Ado-cobalamin). Also synthesizes adenosylcobalamin 5'-phosphate from adenosylcobinamide-GDP and alpha-ribazole 5'-phosphate. The protein is Adenosylcobinamide-GDP ribazoletransferase of Brevibacillus brevis (strain 47 / JCM 6285 / NBRC 100599).